The primary structure comprises 175 residues: Probable DNA-directed RNA polymerase subunit delta (175 aa).

The HTH HARE-type domain occupies cysteine 14–tryptophan 81. A disordered region spans residues isoleucine 91–leucine 175. Residues aspartate 106–leucine 175 show a composition bias toward acidic residues.

This sequence belongs to the RpoE family. In terms of assembly, RNAP is composed of a core of 2 alpha, a beta and a beta' subunits. The core is associated with a delta subunit and one of several sigma factors.

In terms of biological role, participates in both the initiation and recycling phases of transcription. In the presence of the delta subunit, RNAP displays an increased specificity of transcription, a decreased affinity for nucleic acids, and an increased efficiency of RNA synthesis because of enhanced recycling. The protein is Probable DNA-directed RNA polymerase subunit delta of Bacillus anthracis.